Here is a 95-residue protein sequence, read N- to C-terminus: Large ribosomal subunit protein bL25 (95 aa).

The protein belongs to the bacterial ribosomal protein bL25 family. As to quaternary structure, part of the 50S ribosomal subunit; part of the 5S rRNA/L5/L18/L25 subcomplex. Contacts the 5S rRNA. Binds to the 5S rRNA independently of L5 and L18.

Functionally, this is one of the proteins that binds to the 5S RNA in the ribosome where it forms part of the central protuberance. This chain is Large ribosomal subunit protein bL25, found in Shewanella piezotolerans (strain WP3 / JCM 13877).